Reading from the N-terminus, the 322-residue chain is MLNSFKLSLQYILPKLWLTRLAGWGASKRAGWLTKLVIDLFVKYYKVDMKEAQKPDTASYRTFNEFFVRPLRDEVRPIDTDPNVLVMPADGVISQLGKIEEDKILQAKGHNYSLEALLAGNYLMADLFRNGTFVTTYLSPRDYHRVHMPCNGILREMIYVPGDLFSVNHLTAQNVPNLFARNERVICLFDTEFGPMAQILVGATIVGSIETVWAGTITPPREGIIKRWTWPAGENDDSVALLKGQEMGRFKLGSTVINLFAPGKVNLVEQLESLSVTKIGQPLAVSTETFVTPDAEPAPLPAEEIEAEHDASPLVDDKKDQV.

Active-site charge relay system; for autoendoproteolytic cleavage activity residues include Asp90, His147, and Ser254. Catalysis depends on Ser254, which acts as the Schiff-base intermediate with substrate; via pyruvic acid; for decarboxylase activity. Ser254 carries the pyruvic acid (Ser); by autocatalysis modification. Residues Pro293–Val322 form a disordered region. Residues Glu308 to Val322 are compositionally biased toward basic and acidic residues.

The protein belongs to the phosphatidylserine decarboxylase family. PSD-B subfamily. Prokaryotic type I sub-subfamily. In terms of assembly, heterodimer of a large membrane-associated beta subunit and a small pyruvoyl-containing alpha subunit. The cofactor is pyruvate. In terms of processing, is synthesized initially as an inactive proenzyme. Formation of the active enzyme involves a self-maturation process in which the active site pyruvoyl group is generated from an internal serine residue via an autocatalytic post-translational modification. Two non-identical subunits are generated from the proenzyme in this reaction, and the pyruvate is formed at the N-terminus of the alpha chain, which is derived from the carboxyl end of the proenzyme. The autoendoproteolytic cleavage occurs by a canonical serine protease mechanism, in which the side chain hydroxyl group of the serine supplies its oxygen atom to form the C-terminus of the beta chain, while the remainder of the serine residue undergoes an oxidative deamination to produce ammonia and the pyruvoyl prosthetic group on the alpha chain. During this reaction, the Ser that is part of the protease active site of the proenzyme becomes the pyruvoyl prosthetic group, which constitutes an essential element of the active site of the mature decarboxylase.

Its subcellular location is the cell membrane. It carries out the reaction a 1,2-diacyl-sn-glycero-3-phospho-L-serine + H(+) = a 1,2-diacyl-sn-glycero-3-phosphoethanolamine + CO2. Its pathway is phospholipid metabolism; phosphatidylethanolamine biosynthesis; phosphatidylethanolamine from CDP-diacylglycerol: step 2/2. In terms of biological role, catalyzes the formation of phosphatidylethanolamine (PtdEtn) from phosphatidylserine (PtdSer). The chain is Phosphatidylserine decarboxylase proenzyme from Escherichia coli O45:K1 (strain S88 / ExPEC).